Consider the following 332-residue polypeptide: Ribonucleoside-diphosphate reductase small chain C (332 aa).

Fe cation is bound by residues Asp-76, Glu-107, and His-110. Residue Tyr-114 is part of the active site. Glu-169, Glu-203, and His-206 together coordinate Fe cation.

Belongs to the ribonucleoside diphosphate reductase small chain family. As to quaternary structure, homodimer and heterodimer with RNR2A. Heterotetramer of two R1 and two R2 chains. Interacts with CSN7 (via C-terminal tail). Fe cation is required as a cofactor. Expressed in roots, cauline and rosette leaves, stems and flowers.

The protein resides in the cytoplasm. The protein localises to the nucleus. It carries out the reaction a 2'-deoxyribonucleoside 5'-diphosphate + [thioredoxin]-disulfide + H2O = a ribonucleoside 5'-diphosphate + [thioredoxin]-dithiol. Provides the precursors necessary for DNA synthesis. Catalyzes the biosynthesis of deoxyribonucleotides from the corresponding ribonucleotides. Involved in DNA damage repair and programmed cell death inhibition. This is Ribonucleoside-diphosphate reductase small chain C (TSO2) from Arabidopsis thaliana (Mouse-ear cress).